A 355-amino-acid chain; its full sequence is Small ribosomal subunit biogenesis GTPase RsgA 1 (355 aa).

One can recognise a CP-type G domain in the interval 103–262; the sequence is GRVADRQAIA…LIDTPGVREF (160 aa). GTP-binding positions include 152-155 and 204-212; these read NKAD and GSSGVGKSS. Residues Cys-285, Cys-290, His-292, and Cys-298 each coordinate Zn(2+).

Belongs to the TRAFAC class YlqF/YawG GTPase family. RsgA subfamily. In terms of assembly, monomer. Associates with 30S ribosomal subunit, binds 16S rRNA. The cofactor is Zn(2+).

It is found in the cytoplasm. In terms of biological role, one of several proteins that assist in the late maturation steps of the functional core of the 30S ribosomal subunit. Helps release RbfA from mature subunits. May play a role in the assembly of ribosomal proteins into the subunit. Circularly permuted GTPase that catalyzes slow GTP hydrolysis, GTPase activity is stimulated by the 30S ribosomal subunit. This Bacteroides thetaiotaomicron (strain ATCC 29148 / DSM 2079 / JCM 5827 / CCUG 10774 / NCTC 10582 / VPI-5482 / E50) protein is Small ribosomal subunit biogenesis GTPase RsgA 1.